The sequence spans 389 residues: MANQISQHLQVALVAGETSGDLLAGLLLDGLREQWPLMTAVGIGGPQMARRGLVAWWGHDKLSVHGFGWEVLRRYREIVGIRRQLKTRLLRQQPDVFIGVDAPDFNLDLEQDLKAQGIKTVHFVSPSIWAWRPERVEKIRRSVDHVLCIFPFEPALLARHGIAATYVGHPLANVIPMEPDRSAARAALGLADGDQVVAILPGSRQSEINHLALRFFQAAALINKAHPAIKFIVPAIPALRAGIEHAARASGMQAHLQIIAGQSHTVLAACDVTLIASGTATLEAALFKRPMVIAYRMGWLSWQIMRRKQLQPWVGLPNILCQDFVVPELLQDAATAQALADAVLLWIDAKASHPAKIAALQQKFTALHTELQRDTPRLAAHAIQQVLQG.

It belongs to the LpxB family.

The enzyme catalyses a lipid X + a UDP-2-N,3-O-bis[(3R)-3-hydroxyacyl]-alpha-D-glucosamine = a lipid A disaccharide + UDP + H(+). It functions in the pathway bacterial outer membrane biogenesis; LPS lipid A biosynthesis. Condensation of UDP-2,3-diacylglucosamine and 2,3-diacylglucosamine-1-phosphate to form lipid A disaccharide, a precursor of lipid A, a phosphorylated glycolipid that anchors the lipopolysaccharide to the outer membrane of the cell. The sequence is that of Lipid-A-disaccharide synthase from Albidiferax ferrireducens (strain ATCC BAA-621 / DSM 15236 / T118) (Rhodoferax ferrireducens).